The following is a 285-amino-acid chain: MAVVTMKQMLDSGTHFGHQTRRWNPKMKRFILTDRNGIYIIDLQQTLTYIDKAYEFVKETVAHGGTVLFVGTKKQAQESIASEATRVGMPYVNQRWLGGMLTNFTTVHKRLLRLKELEAMEQTGGFEGRTKKEILMLTREMTKLDRTLGGIRDMAKVPSAVWIVDTNKEHLAVAEARKLNIPVIAILDTNCDPDLVDYPIPGNDDAIRSAALLTKVVASAVAEGVQARAGLSADKDAKPEAGAGEPLAEWEQELLSQAAPAAEAEAAPAAEAEAAPAAEAPATEA.

A disordered region spans residues 228 to 285 (RAGLSADKDAKPEAGAGEPLAEWEQELLSQAAPAAEAEAAPAAEAEAAPAAEAPATEA). Residues 258-285 (AAPAAEAEAAPAAEAEAAPAAEAPATEA) show a composition bias toward low complexity.

The protein belongs to the universal ribosomal protein uS2 family.

In Rhodococcus erythropolis (strain PR4 / NBRC 100887), this protein is Small ribosomal subunit protein uS2.